The chain runs to 173 residues: MKYGIALFPSKRIQDFANSYRKRYDSHYALIPPHLTLKEPFEADDQKIKEIVKELRKIAAETDVIPLKVTKFSSFYPTSNVIYLKVEPNETLERLHERLHSGILADKSEYVFVPHITIGRDLPNAEYADVYGQLRMQNVHFEETVDRFHLLYQLENGSWTVYETFLVGGKEQE.

The active-site Proton donor is His34. 2 short sequence motifs (HXTX) span residues 34-37 (HLTL) and 115-118 (HITI). His115 functions as the Proton acceptor in the catalytic mechanism.

Belongs to the 2H phosphoesterase superfamily. YjcG family.

This chain is Putative phosphoesterase GWCH70_0799, found in Geobacillus sp. (strain WCH70).